A 525-amino-acid polypeptide reads, in one-letter code: C6 finger transcription factor fsqA (525 aa).

The zn(2)-C6 fungal-type DNA-binding region spans 12-53; that stretch reads CDRCRGQKLRCVGAGKPIPNSSSRLLRNEIPCDRCRRAKVEC. Disordered regions lie at residues 80–142, 204–260, and 327–371; these read RSSS…LGDM, EWNS…EPAG, and RARS…ARSS. The segment covering 95-115 has biased composition (polar residues); the sequence is PPNSLVTAASKPHPNSLSFNH. The segment covering 327 to 337 has biased composition (polar residues); that stretch reads RARSQWSSLPE.

It is found in the nucleus. Functionally, transcription factor that regulates the expression of the gene cluster that mediates the biosynthesis of the isoquinoline alkaloids fumisoquin A, fumisoquin B and fumisoquin C; as well as small amounts of fumipyrrole as a shunt metabolite. The products of the cluster lead to a brown coloration and are important for growth and conidiation. The chain is C6 finger transcription factor fsqA from Aspergillus fumigatus (strain ATCC MYA-4609 / CBS 101355 / FGSC A1100 / Af293) (Neosartorya fumigata).